Reading from the N-terminus, the 95-residue chain is Small ribosomal subunit protein uS19 (95 aa).

The protein belongs to the universal ribosomal protein uS19 family.

In terms of biological role, protein S19 forms a complex with S13 that binds strongly to the 16S ribosomal RNA. This chain is Small ribosomal subunit protein uS19, found in Lactobacillus gasseri (strain ATCC 33323 / DSM 20243 / BCRC 14619 / CIP 102991 / JCM 1131 / KCTC 3163 / NCIMB 11718 / NCTC 13722 / AM63).